Here is a 246-residue protein sequence, read N- to C-terminus: MTHSNRMLLGVNIDHVATLRQARGTRYPDPVKAALDAEEAGADGITVHLREDRRHIQERDVVVLKDVLQTRMNFEMGVTEEMMAFAEKIRPAHICLVPETRQELTTEGGLDVAGQEARIKAAVERLARTGAEVSLFIDADERQIEASRRVGAPAIELHTGRYADAQTPTEVAEELKRIVDGVAFGVGQGLIVNAGHGLHYHNVEAVAAIKGINELNIGHALVAHALFVGFKAAVAEMKALIVAASR.

Asn12 contacts 3-amino-2-oxopropyl phosphate. 14–15 (DH) lines the 1-deoxy-D-xylulose 5-phosphate pocket. Arg23 serves as a coordination point for 3-amino-2-oxopropyl phosphate. His48 functions as the Proton acceptor in the catalytic mechanism. 2 residues coordinate 1-deoxy-D-xylulose 5-phosphate: Arg50 and His55. The active-site Proton acceptor is the Glu75. Position 105 (Thr105) interacts with 1-deoxy-D-xylulose 5-phosphate. The active-site Proton donor is the His196. Residues Gly197 and 218–219 (GH) each bind 3-amino-2-oxopropyl phosphate.

It belongs to the PNP synthase family. As to quaternary structure, homooctamer; tetramer of dimers.

Its subcellular location is the cytoplasm. It catalyses the reaction 3-amino-2-oxopropyl phosphate + 1-deoxy-D-xylulose 5-phosphate = pyridoxine 5'-phosphate + phosphate + 2 H2O + H(+). Its pathway is cofactor biosynthesis; pyridoxine 5'-phosphate biosynthesis; pyridoxine 5'-phosphate from D-erythrose 4-phosphate: step 5/5. Functionally, catalyzes the complicated ring closure reaction between the two acyclic compounds 1-deoxy-D-xylulose-5-phosphate (DXP) and 3-amino-2-oxopropyl phosphate (1-amino-acetone-3-phosphate or AAP) to form pyridoxine 5'-phosphate (PNP) and inorganic phosphate. The protein is Pyridoxine 5'-phosphate synthase of Pseudomonas putida (strain GB-1).